The sequence spans 306 residues: Follistatin-related protein 1 (306 aa).

Positions 1–18 (MWKRWLALSLVTIALVHG) are cleaved as a signal peptide. The 24-residue stretch at 28–51 (ICANVFCGAGRECAVTEKGEPTCL) folds into the Follistatin-like domain. 5 disulfide bridges follow: C29-C40, C34-C50, C52-C82, C56-C75, and C64-C96. The 53-residue stretch at 46–98 (GEPTCLCIEQCKPHKRPVCGSNGKTYLNHCELHRDACLTGSKIQVDYDGHCKE) folds into the Kazal-like domain. The N-linked (GlcNAc...) asparagine glycan is linked to N142. One can recognise an EF-hand 1 domain in the interval 142–176 (NYSEILDKYFKSFDNGDSHLDSSEFLKFVEQNETA). Phosphoserine is present on S163. 2 N-linked (GlcNAc...) asparagine glycosylation sites follow: N173 and N178. One can recognise an EF-hand 2 domain in the interval 191–226 (LRSLCVDALIELSDENADWKLSFQEFLKCLNPSFNP). The VWFC domain maps to 231–285 (CALEDETYADGAETEVDCNRCVCSCGHWVCTAMTCDGKNQKGVQTHTEEEKTGYV).

Homodimer. Interacts with SCN10A. Interacts with DIP2A; DIP2A may act as a cell surface receptor for FSTL1. Interacts with BMP4. Interacts with CD14; this interaction promotes TL4-mediated signaling cascade. During central nervous system development, strongly expressed in the telencephalon, diencephalon, brainstem, limbic system and spinal cord. Widely expressed in all organs.

Its subcellular location is the secreted. Functionally, secreted glycoprotein that is involved in various physiological processes, such as angiogenesis, regulation of the immune response, cell proliferation and differentiation. Plays a role in the development of the central nervous system, skeletal system, lungs, and ureter. Promotes endothelial cell survival, migration and differentiation into network structures in an AKT-dependent manner. Also promotes survival of cardiac myocytes. Initiates various signaling cascades by activating different receptors on the cell surface such as DIP2A, TLR4 or BMP receptors. This is Follistatin-related protein 1 (Fstl1) from Mus musculus (Mouse).